A 125-amino-acid polypeptide reads, in one-letter code: Small ribosomal subunit protein uS12 (125 aa).

Residues M1 to P28 are disordered. D89 carries the post-translational modification 3-methylthioaspartic acid. Residues T104–D125 form a disordered region.

Belongs to the universal ribosomal protein uS12 family. As to quaternary structure, part of the 30S ribosomal subunit. Contacts proteins S8 and S17. May interact with IF1 in the 30S initiation complex.

Functionally, with S4 and S5 plays an important role in translational accuracy. Its function is as follows. Interacts with and stabilizes bases of the 16S rRNA that are involved in tRNA selection in the A site and with the mRNA backbone. Located at the interface of the 30S and 50S subunits, it traverses the body of the 30S subunit contacting proteins on the other side and probably holding the rRNA structure together. The combined cluster of proteins S8, S12 and S17 appears to hold together the shoulder and platform of the 30S subunit. This is Small ribosomal subunit protein uS12 from Prochlorococcus marinus subsp. pastoris (strain CCMP1986 / NIES-2087 / MED4).